A 360-amino-acid chain; its full sequence is Phospho-N-acetylmuramoyl-pentapeptide-transferase (360 aa).

The next 10 helical transmembrane spans lie at 26–46 (AIVS…RMIA), 72–92 (PTMG…LWAY), 94–114 (SNPY…IGFV), 132–152 (WKYF…YLAG), 168–188 (VMPQ…VGTG), 199–219 (GLAI…AWAT), 236–256 (AGEL…FLWF), 263–283 (VFMG…IAVL), 288–308 (FLLV…ILQV), and 338–358 (VIVR…ATLK).

The protein belongs to the glycosyltransferase 4 family. MraY subfamily. The cofactor is Mg(2+).

It localises to the cell inner membrane. It catalyses the reaction UDP-N-acetyl-alpha-D-muramoyl-L-alanyl-gamma-D-glutamyl-meso-2,6-diaminopimeloyl-D-alanyl-D-alanine + di-trans,octa-cis-undecaprenyl phosphate = di-trans,octa-cis-undecaprenyl diphospho-N-acetyl-alpha-D-muramoyl-L-alanyl-D-glutamyl-meso-2,6-diaminopimeloyl-D-alanyl-D-alanine + UMP. It functions in the pathway cell wall biogenesis; peptidoglycan biosynthesis. Catalyzes the initial step of the lipid cycle reactions in the biosynthesis of the cell wall peptidoglycan: transfers peptidoglycan precursor phospho-MurNAc-pentapeptide from UDP-MurNAc-pentapeptide onto the lipid carrier undecaprenyl phosphate, yielding undecaprenyl-pyrophosphoryl-MurNAc-pentapeptide, known as lipid I. The chain is Phospho-N-acetylmuramoyl-pentapeptide-transferase from Citrobacter koseri (strain ATCC BAA-895 / CDC 4225-83 / SGSC4696).